A 75-amino-acid polypeptide reads, in one-letter code: Large ribosomal subunit protein bL28 (75 aa).

Residues 1–21 are disordered; the sequence is MARVCQVTGKRPMSGNKRSHA.

This sequence belongs to the bacterial ribosomal protein bL28 family.

The polypeptide is Large ribosomal subunit protein bL28 (Blochmanniella pennsylvanica (strain BPEN)).